A 106-amino-acid chain; its full sequence is Large ribosomal subunit protein eL42 (106 aa).

Belongs to the eukaryotic ribosomal protein eL42 family.

The protein is Large ribosomal subunit protein eL42 (RPL44) of Eremothecium gossypii (strain ATCC 10895 / CBS 109.51 / FGSC 9923 / NRRL Y-1056) (Yeast).